A 432-amino-acid chain; its full sequence is Adenylosuccinate synthetase (432 aa).

Residues 13-19 (GDEGKGK) and 41-43 (GHT) each bind GTP. The active-site Proton acceptor is the aspartate 14. Positions 14 and 41 each coordinate Mg(2+). IMP-binding positions include 14 to 17 (DEGK), 39 to 42 (NAGH), threonine 130, arginine 144, glutamine 225, threonine 240, and arginine 304. Histidine 42 acts as the Proton donor in catalysis. 300–306 (AVTGRPR) contributes to the substrate binding site. GTP is bound by residues arginine 306, 332-334 (KLD), and 415-417 (STG).

It belongs to the adenylosuccinate synthetase family. In terms of assembly, homodimer. The cofactor is Mg(2+).

The protein resides in the cytoplasm. The enzyme catalyses IMP + L-aspartate + GTP = N(6)-(1,2-dicarboxyethyl)-AMP + GDP + phosphate + 2 H(+). Its pathway is purine metabolism; AMP biosynthesis via de novo pathway; AMP from IMP: step 1/2. Plays an important role in the de novo pathway of purine nucleotide biosynthesis. Catalyzes the first committed step in the biosynthesis of AMP from IMP. In Histophilus somni (strain 2336) (Haemophilus somnus), this protein is Adenylosuccinate synthetase.